The following is an 819-amino-acid chain: Leucine--tRNA ligase (819 aa).

A 'HIGH' region motif is present at residues 40 to 51 (PYPSGAGLHVGH). The 'KMSKS' region signature appears at 600 to 604 (KMSKS). K603 contributes to the ATP binding site.

Belongs to the class-I aminoacyl-tRNA synthetase family.

Its subcellular location is the cytoplasm. It carries out the reaction tRNA(Leu) + L-leucine + ATP = L-leucyl-tRNA(Leu) + AMP + diphosphate. In Chlamydia trachomatis serovar D (strain ATCC VR-885 / DSM 19411 / UW-3/Cx), this protein is Leucine--tRNA ligase.